The chain runs to 499 residues: Protein SENSITIVE TO PROTON RHIZOTOXICITY 1 (499 aa).

The interval 1-31 (METEDDLCNTNWGSSSSKSREPGSSDCGNST) is disordered. The C2H2-type 1 zinc finger occupies 244 to 266 (HFCTICGKGFKRDANLRMHMRGH). Residues 354–385 (KHCGKNKWLCSCGTTFSRKDKLFGHIALFQGH) form a C2H2-type 2; atypical zinc finger. A disordered region spans residues 390 to 436 (PLEETKPSASTSTQRGSSEGGNNNQGMVGFNLGSASNANQETTQPGM). Polar residues-rich tracts occupy residues 396-415 (PSAS…NNQG) and 422-435 (GSAS…TQPG).

In terms of tissue distribution, expressed in roots (e.g. root tips and lateral roots), leaves, flowers (e.g. stigma, sepal, anther, and filament), stems, siliques and cotyledons.

The protein resides in the nucleus. Its function is as follows. Probable transcription factor. Together with STOP2, plays a critical role in tolerance to major stress factors in acid soils such as proton H(+) and aluminum ion Al(3+). Required for the expression of genes in response to acidic stress (e.g. ALMT1 and MATE), and Al-activated citrate exudation. The protein is Protein SENSITIVE TO PROTON RHIZOTOXICITY 1 of Arabidopsis thaliana (Mouse-ear cress).